The sequence spans 224 residues: Ribonuclease 3 (224 aa).

The region spanning 4–127 (IEKLEQSLTY…IIGAIHLEAG (124 aa)) is the RNase III domain. Glu40 is a Mg(2+) binding site. Asp44 is a catalytic residue. Residues Asp113 and Glu116 each contribute to the Mg(2+) site. The active site involves Glu116. The region spanning 154-223 (DYKTKLQEIT…AKIALEKLGA (70 aa)) is the DRBM domain.

This sequence belongs to the ribonuclease III family. Homodimer. The cofactor is Mg(2+).

The protein localises to the cytoplasm. It carries out the reaction Endonucleolytic cleavage to 5'-phosphomonoester.. Its function is as follows. Digests double-stranded RNA. Involved in the processing of primary rRNA transcript to yield the immediate precursors to the large and small rRNAs (23S and 16S). Processes some mRNAs, and tRNAs when they are encoded in the rRNA operon. Processes pre-crRNA and tracrRNA of type II CRISPR loci if present in the organism. The protein is Ribonuclease 3 of Campylobacter jejuni subsp. jejuni serotype O:6 (strain 81116 / NCTC 11828).